The chain runs to 516 residues: MMDVSSWKEMEVALVSFDNADQIVEDPCYSNDLSPASQSRKGHPSCANLLSNWRILINSENANNETIFSRFSAEFSEHLVGERVGMEEGDQRVIINIAGLRFETRLKTLNQFPETLLGDPEKRMRYFDSMRNEYFFDRNRPSFDGILYYYQSGGKIRRPANVPIDVFADEITFYELGDEAMDQFREDEGFIKDPETLLPTNDFHRQFWLLFEYPESSSAARGVALVSVLVIVISIIIFCMETLPEFREEREYKSTQELSKNTTDTLLAHSTFTDPFFVIETACIIWFSFELFVRFIVCPSKTEFFKNIMNIIDIVSIIPYFVTLTTELIQQSELNGQQNMSLAILRIIRLVRVFRIFKLSRHSKGLQILGQTLKASMRELGLLIFFLFIGVILFSSAVYFAEVDEPQSHFSSIPDGFWWAVVTMTTVGYGDMCPTTLGGKIVGTLCAIAGVLTIALPVPVIVSNFNYFYHRETENEEKQILPGEVERILNSVVTGNDSMESLNKTNGGYPRDKAKK.

The helical transmembrane segment at 223–244 (VALVSVLVIVISIIIFCMETLP) threads the bilayer. A glycan (N-linked (GlcNAc...) asparagine) is linked at asparagine 261. Residues 276–296 (FFVIETACIIWFSFELFVRFI) form a helical membrane-spanning segment. A helical membrane pass occupies residues 308-328 (IMNIIDIVSIIPYFVTLTTEL). The N-linked (GlcNAc...) asparagine glycan is linked to asparagine 339. A helical; Voltage-sensor membrane pass occupies residues 344 to 363 (ILRIIRLVRVFRIFKLSRHS). Residues 380–400 (LGLLIFFLFIGVILFSSAVYF) form a helical membrane-spanning segment. The Selectivity filter signature appears at 426–431 (TVGYGD). The chain crosses the membrane as a helical span at residues 441-461 (IVGTLCAIAGVLTIALPVPVI). A glycan (N-linked (GlcNAc...) asparagine) is linked at asparagine 503.

Belongs to the potassium channel family. A (Shaker) (TC 1.A.1.2) subfamily. Kv1.8/KCNA10 sub-subfamily. In terms of assembly, homotetramer. Detected in brain, cochlear sensory epithelium, cochlear ganglion, tegumentum vasculosum. Detected at low levels in cochlear lagena.

Its subcellular location is the membrane. The catalysed reaction is K(+)(in) = K(+)(out). With respect to regulation, the channel activity is up-regulated by cAMP. Its function is as follows. Voltage-gated potassium ion channel that mediates K(+) permeability of excitable membranes. When opened in response to the voltage difference across the membrane, KCNA10 channel selectively allows the flow of potassium ions across the membrane down their electrochemical gradient. This is Potassium voltage-gated channel subfamily A member 10 (KCNA10) from Gallus gallus (Chicken).